Consider the following 265-residue polypeptide: UPF0354 protein ABC2771 (265 aa).

This sequence belongs to the UPF0354 family.

This chain is UPF0354 protein ABC2771, found in Shouchella clausii (strain KSM-K16) (Alkalihalobacillus clausii).